The sequence spans 277 residues: Large ribosomal subunit protein uL2c (277 aa).

The segment at 225-277 (MNPCDHPHGGGEGRSPIGRPKPVTPWGKPALGKKTRSPKRFSNKYIIRSRKMV) is disordered. The segment covering 255-277 (LGKKTRSPKRFSNKYIIRSRKMV) has biased composition (basic residues).

This sequence belongs to the universal ribosomal protein uL2 family. In terms of assembly, part of the 50S ribosomal subunit.

It is found in the plastid. The protein resides in the chloroplast. This Euglena gracilis protein is Large ribosomal subunit protein uL2c (rpl2).